The following is a 355-amino-acid chain: MRFSDNLAKILDKYENLGNKLSSGIMGDEFVKASKEYAELEDVVAKIKEYNKAKSELEEANNFKLEVGLDNATLEMIEDEIYTLENSLPKLERAVKIALLPKDDADSKSAIIEVRAGSGGEEAALFAAVLFNMYQRYAELKGWRFEILAISDTGIGGYKEASASIKGKDVFSKLKFESGVHRVQRVPETESQGRIHTSAATVAVLPEAEEVDIKIEDKDLRIDTYRASGAGGQHVNTTDSAVRITHIPTGITVALQDEKSQHKNKAKALKILRARIYEEERRKKEQARADSRRGQVGSGDRSERIRTYNFPQGRVSDHRIHLTLYKIDEVVKNGQLDEFVEALIADDEAKKLLEI.

An N5-methylglutamine modification is found at Gln-233. Basic and acidic residues predominate over residues 282 to 293; it reads RKKEQARADSRR. Residues 282-305 form a disordered region; it reads RKKEQARADSRRGQVGSGDRSERI.

The protein belongs to the prokaryotic/mitochondrial release factor family. Post-translationally, methylated by PrmC. Methylation increases the termination efficiency of RF1.

Its subcellular location is the cytoplasm. Functionally, peptide chain release factor 1 directs the termination of translation in response to the peptide chain termination codons UAG and UAA. This Rickettsia rickettsii (strain Iowa) protein is Peptide chain release factor 1.